The sequence spans 116 residues: Iron-sulfur cluster insertion protein ErpA (116 aa).

C44, C108, and C110 together coordinate iron-sulfur cluster.

The protein belongs to the HesB/IscA family. As to quaternary structure, homodimer. Iron-sulfur cluster serves as cofactor.

Required for insertion of 4Fe-4S clusters for at least IspG. The chain is Iron-sulfur cluster insertion protein ErpA from Shewanella piezotolerans (strain WP3 / JCM 13877).